Here is a 1030-residue protein sequence, read N- to C-terminus: Probable serine/threonine-protein kinase SIS8 (1030 aa).

2 stretches are compositionally biased toward polar residues: residues 44 to 58 (PNQS…STTK) and 399 to 419 (YSAS…NGIE). Disordered regions lie at residues 44–84 (PNQS…PEIK), 399–474 (YSAS…KAPF), 555–625 (TVES…ASST), and 689–736 (LGSN…SDCD). Basic and acidic residues-rich tracts occupy residues 426–435 (TEFRTGEHRS), 458–471 (ISRE…KVEK), and 560–580 (NSTE…EGRH). The segment covering 613 to 625 (SQSDSSHSEASST) has biased composition (low complexity). Residues 748-1003 (ITVGERIGLG…AEIMASLKRL (256 aa)) enclose the Protein kinase domain. Residues 754 to 762 (IGLGSYGEV) and Lys-775 each bind ATP. The active-site Proton acceptor is Asp-871. Residues 1007–1023 (VTGSNIPRPVPSSSSLP) are compositionally biased toward polar residues. Residues 1007–1030 (VTGSNIPRPVPSSSSLPTEHEQKD) are disordered.

The protein belongs to the protein kinase superfamily. Ser/Thr protein kinase family. Interacts with UGT72E1. Expressed roots, rosette and cauline leaves, and at lower levels in flowers and siliques.

The protein resides in the nucleus. It catalyses the reaction L-seryl-[protein] + ATP = O-phospho-L-seryl-[protein] + ADP + H(+). The enzyme catalyses L-threonyl-[protein] + ATP = O-phospho-L-threonyl-[protein] + ADP + H(+). Acts as a negative regulator of salt tolerance. Mediates sugar response during early seedling development. The sequence is that of Probable serine/threonine-protein kinase SIS8 from Arabidopsis thaliana (Mouse-ear cress).